Reading from the N-terminus, the 273-residue chain is Testis-specific serine/threonine-protein kinase 6 (273 aa).

In terms of domain architecture, Protein kinase spans 12–267 (YKLGRTIGEG…AGQVARNGWL (256 aa)). ATP-binding positions include 18-26 (IGEGSYSKV) and lysine 41. Residue aspartate 135 is the Proton acceptor of the active site.

This sequence belongs to the protein kinase superfamily. CAMK Ser/Thr protein kinase family. Microtubule inner protein component of sperm flagellar doublet microtubules. Interacts with HSP90; this interaction stabilizes and activates TSSK6. Interacts with the heat shock proteins HSPCB, HSPA8 and HSPA1A. These interactions appear to be required for TSSK6 kinase activity. Interacts with TSACC; this interaction is direct and recruits TSACC to HSP90, which is essential for kinase activity. It depends on Mg(2+) as a cofactor. In terms of processing, autophosphorylated. Ubiquitinated; HSP90 activity negatively regulates ubiquitination and degradation. In terms of tissue distribution, expressed in the testis, localized to the heads of elongating spermatids.

Its subcellular location is the cytoplasm. The protein resides in the cytoskeleton. The protein localises to the flagellum axoneme. It is found in the nucleus. It carries out the reaction L-seryl-[protein] + ATP = O-phospho-L-seryl-[protein] + ADP + H(+). The catalysed reaction is L-threonyl-[protein] + ATP = O-phospho-L-threonyl-[protein] + ADP + H(+). Its function is as follows. Serine/threonine-protein kinase component of the sperm flagellar doublet microtubules. May act as a regulator of sperm motility by mediating phosphorylation of sperm doublet microtubule proteins. Plays a role in DNA condensation during postmeiotic chromatin remodeling and histone-to-protamine transition during spermatogenesis. The protein is Testis-specific serine/threonine-protein kinase 6 of Mus musculus (Mouse).